The sequence spans 335 residues: L-lactate dehydrogenase B chain (335 aa).

NAD(+)-binding positions include 29-57 (GQVGMACAISILEKGLCDELALVDVVEDK) and R99. Residues R106, N138, and R169 each contribute to the substrate site. Position 138 (N138) interacts with NAD(+). The Proton acceptor role is filled by H193. T248 lines the substrate pocket.

This sequence belongs to the LDH/MDH superfamily. LDH family. As to quaternary structure, homotetramer.

It is found in the cytoplasm. The enzyme catalyses (S)-lactate + NAD(+) = pyruvate + NADH + H(+). It functions in the pathway fermentation; pyruvate fermentation to lactate; (S)-lactate from pyruvate: step 1/1. Interconverts simultaneously and stereospecifically pyruvate and lactate with concomitant interconversion of NADH and NAD(+). This chain is L-lactate dehydrogenase B chain (LDHB), found in Sceloporus undulatus (Eastern fence lizard).